The primary structure comprises 1390 residues: DNA-directed RNA polymerase subunit beta' (1390 aa).

Positions 73, 75, 88, and 91 each coordinate Zn(2+). Residues Asp464, Asp466, and Asp468 each contribute to the Mg(2+) site. Cys810, Cys884, Cys891, and Cys894 together coordinate Zn(2+). The disordered stretch occupies residues Glu1365–Thr1390.

This sequence belongs to the RNA polymerase beta' chain family. In terms of assembly, the RNAP catalytic core consists of 2 alpha, 1 beta, 1 beta' and 1 omega subunit. When a sigma factor is associated with the core the holoenzyme is formed, which can initiate transcription. The cofactor is Mg(2+). Zn(2+) serves as cofactor.

It catalyses the reaction RNA(n) + a ribonucleoside 5'-triphosphate = RNA(n+1) + diphosphate. Functionally, DNA-dependent RNA polymerase catalyzes the transcription of DNA into RNA using the four ribonucleoside triphosphates as substrates. The sequence is that of DNA-directed RNA polymerase subunit beta' from Methylacidiphilum infernorum (isolate V4) (Methylokorus infernorum (strain V4)).